The chain runs to 324 residues: Holliday junction branch migration complex subunit RuvB (324 aa).

Residues 1–168 (MEDLALRPKT…FGIVEHLEYY (168 aa)) are large ATPase domain (RuvB-L). Residues Leu6, Arg7, Gly48, Lys51, Thr52, Thr53, 115–117 (EDF), Arg158, Tyr168, and Arg205 each bind ATP. Thr52 contacts Mg(2+). The tract at residues 169 to 239 (TPEELAQGVM…RALEALAALG (71 aa)) is small ATPAse domain (RuvB-S). The interval 242–324 (ELGLEKRDRE…PPPVGPLLEP (83 aa)) is head domain (RuvB-H). DNA contacts are provided by Arg297 and Arg302.

It belongs to the RuvB family. As to quaternary structure, homohexamer. Forms an RuvA(8)-RuvB(12)-Holliday junction (HJ) complex. HJ DNA is sandwiched between 2 RuvA tetramers; dsDNA enters through RuvA and exits via RuvB. An RuvB hexamer assembles on each DNA strand where it exits the tetramer. Each RuvB hexamer is contacted by two RuvA subunits (via domain III) on 2 adjacent RuvB subunits; this complex drives branch migration. In the full resolvosome a probable DNA-RuvA(4)-RuvB(12)-RuvC(2) complex forms which resolves the HJ.

The protein localises to the cytoplasm. The catalysed reaction is ATP + H2O = ADP + phosphate + H(+). Its activity is regulated as follows. The ATPase activity of RuvB is enhanced by RuvA. Its function is as follows. The RuvA-RuvB-RuvC complex processes Holliday junction (HJ) DNA during genetic recombination and DNA repair, while the RuvA-RuvB complex plays an important role in the rescue of blocked DNA replication forks via replication fork reversal (RFR). RuvA specifically binds to HJ cruciform DNA, conferring on it an open structure. The RuvB hexamer acts as an ATP-dependent pump, pulling dsDNA into and through the RuvAB complex. RuvB forms 2 homohexamers on either side of HJ DNA bound by 1 or 2 RuvA tetramers; 4 subunits per hexamer contact DNA at a time. Coordinated motions by a converter formed by DNA-disengaged RuvB subunits stimulates ATP hydrolysis and nucleotide exchange. Immobilization of the converter enables RuvB to convert the ATP-contained energy into a lever motion, pulling 2 nucleotides of DNA out of the RuvA tetramer per ATP hydrolyzed, thus driving DNA branch migration. The RuvB motors rotate together with the DNA substrate, which together with the progressing nucleotide cycle form the mechanistic basis for DNA recombination by continuous HJ branch migration. Branch migration allows RuvC to scan DNA until it finds its consensus sequence, where it cleaves and resolves cruciform DNA. Has Mg(2+)-, DNA-dependent ATPase activity; dsDNA and supercoiled DNA but not ssDNA stimulate activity. Binds to linear dsDNA in the absence of ATP or ATP-gamma-S. This subunit can promote Holliday junction migration alone in vitro. Partially complements an E.coli deletion for UV sensitivity. This chain is Holliday junction branch migration complex subunit RuvB, found in Thermus thermophilus.